The chain runs to 205 residues: E3 ubiquitin-protein ligase complex slx8-rfp subunit rfp2 (205 aa).

Residues 147–190 form an RING-type; degenerate zinc finger; the sequence is CAKCGNELVSDEKKSIFAAKCGHLFCSTCAKELRKKTVPCPVQH.

As to quaternary structure, part of an E3 ubiquitin complex including rfp1, rfp2 and slx8. Interacts with slx8.

The protein resides in the nucleus. It catalyses the reaction S-ubiquitinyl-[E2 ubiquitin-conjugating enzyme]-L-cysteine + [acceptor protein]-L-lysine = [E2 ubiquitin-conjugating enzyme]-L-cysteine + N(6)-ubiquitinyl-[acceptor protein]-L-lysine.. It functions in the pathway protein modification; protein ubiquitination. Functionally, mediates ubiquitination and subsequent desumoylation/degradation of sumoylated proteins and proteins containing SUMO-like domains. Involved in maintaining genome stability where it acts in the cellular response to DNA damage. The polypeptide is E3 ubiquitin-protein ligase complex slx8-rfp subunit rfp2 (rfp2) (Schizosaccharomyces pombe (strain 972 / ATCC 24843) (Fission yeast)).